Reading from the N-terminus, the 1376-residue chain is Phospholipid-transporting ATPase DRS2 (1376 aa).

Positions 1–10 (MAGRPTGGPQ) are enriched in gly residues. Disordered stretches follow at residues 1-151 (MAGR…AAAR) and 180-217 (GYSE…PKRD). Residues 1–306 (MAGRPTGGPQ…QIPGLSPTNR (306 aa)) lie on the Cytoplasmic side of the membrane. Over residues 40–50 (DLMRTYTRDQE) the composition is skewed to basic and acidic residues. Low complexity predominate over residues 85-96 (QSSSSNNNNNNN). A compositionally biased stretch (polar residues) spans 97–115 (VSAPYSRSGRQYSQTSDLG). The span at 191–203 (PGGGGGGAGGGGH) shows a compositional bias: gly residues. A helical membrane pass occupies residues 307 to 327 (FTTIIPLVAVLMVSAGKELVE). Residues 328–509 (DYRRKQADAA…KVEKKLNTLV (182 aa)) are Extracellular-facing. N339, N433, and N490 each carry an N-linked (GlcNAc...) asparagine glycan. The chain crosses the membrane as a helical span at residues 510–530 (LLLVGILMVLSIISTVGDLII). Residues 531-559 (RRVEGDAISYLMLDQPDTAGKIAETFFKD) are Cytoplasmic-facing. Residues 560–580 (MVTYWVLFSSLVPISLFVTVE) form a helical membrane-spanning segment. At 581-1107 (MVKYWHGILI…VFSGAVIYES (527 aa)) the chain is on the extracellular side. D625 (4-aspartylphosphate intermediate) is an active-site residue. ATP contacts are provided by D625, K626, and T627. D625 is a binding site for Mg(2+). Mg(2+) is bound at residue T627. The N-linked (GlcNAc...) asparagine glycan is linked to N679. Residues E720 and F761 each contribute to the ATP site. Residue N762 is glycosylated (N-linked (GlcNAc...) asparagine). ATP is bound by residues S763, K766, K784, R817, T818, T898, G899, D900, R991, and K997. D1018 is a Mg(2+) binding site. N1021 and D1022 together coordinate ATP. Residue D1022 participates in Mg(2+) binding. N1083 is a glycosylation site (N-linked (GlcNAc...) asparagine). Residues 1108-1128 (WTLTFYNVFYTVLPPLALGIL) traverse the membrane as a helical segment. Over 1129 to 1165 (DQFISARLLDRYPQLYSMGQQNQFFRMKVFIEWLLNA) the chain is Cytoplasmic. The chain crosses the membrane as a helical span at residues 1166–1186 (VYHSIILYVFGELIWHGDLIL). The Extracellular segment spans residues 1187–1190 (ENGQ). Residues 1191 to 1211 (IAGHWMWGTALYAPVLLTVLG) form a helical membrane-spanning segment. K1212 contacts a 1,2-diacyl-sn-glycero-3-phospho-(1D-myo-inositol 4-phosphate). The Cytoplasmic segment spans residues 1212-1224 (KAGLVTSNWTKYH). Residues 1225 to 1245 (VIAIPGSMAIWWIFIAVYGTV) traverse the membrane as a helical segment. The Extracellular segment spans residues 1246 to 1257 (APMIPFSPEFHG). Residues 1258–1278 (IVPKLYSSPIFWLQSFALAIL) traverse the membrane as a helical segment. Residues 1279–1376 (CLLRDFAWKY…TSSRPQGQGT (98 aa)) are Cytoplasmic-facing. 5 residues coordinate a 1,2-diacyl-sn-glycero-3-phospho-(1D-myo-inositol 4-phosphate): R1282, W1286, K1287, Y1298, and H1299.

It belongs to the cation transport ATPase (P-type) (TC 3.A.3) family. Type IV subfamily. Mg(2+) is required as a cofactor.

It is found in the cell membrane. Its subcellular location is the golgi apparatus. The protein localises to the trans-Golgi network membrane. It catalyses the reaction ATP + H2O + phospholipidSide 1 = ADP + phosphate + phospholipidSide 2.. It carries out the reaction a 1,2-diacyl-sn-glycero-3-phospho-L-serine(out) + ATP + H2O = a 1,2-diacyl-sn-glycero-3-phospho-L-serine(in) + ADP + phosphate + H(+). The enzyme catalyses a 1,2-diacyl-sn-glycero-3-phosphoethanolamine(out) + ATP + H2O = a 1,2-diacyl-sn-glycero-3-phosphoethanolamine(in) + ADP + phosphate + H(+). Functionally, catalytic component of a P4-ATPase flippase complex which catalyzes the hydrolysis of ATP coupled to the transport of phosphatidylserine and small amounts of ethanolamine from the lumen to the cytosolic leaflet of the trans-Golgi network and cell membrane and ensures the maintenance of asymmetric distribution of phospholipids. Required for efficient vesicle transport during toxin secretion. This is Phospholipid-transporting ATPase DRS2 (DRS2) from Verticillium dahliae (strain VdLs.17 / ATCC MYA-4575 / FGSC 10137) (Verticillium wilt).